Reading from the N-terminus, the 251-residue chain is Pyridoxine 5'-phosphate synthase (251 aa).

3-amino-2-oxopropyl phosphate is bound by residues Asn8 and Arg19. Catalysis depends on His44, which acts as the Proton acceptor. Residues Arg46 and His51 each coordinate 1-deoxy-D-xylulose 5-phosphate. The Proton acceptor role is filled by Glu76. Thr106 contacts 1-deoxy-D-xylulose 5-phosphate. The Proton donor role is filled by His200. 3-amino-2-oxopropyl phosphate is bound by residues Asp201 and 223-224 (GH).

The protein belongs to the PNP synthase family. As to quaternary structure, homooctamer; tetramer of dimers.

Its subcellular location is the cytoplasm. It carries out the reaction 3-amino-2-oxopropyl phosphate + 1-deoxy-D-xylulose 5-phosphate = pyridoxine 5'-phosphate + phosphate + 2 H2O + H(+). The protein operates within cofactor biosynthesis; pyridoxine 5'-phosphate biosynthesis; pyridoxine 5'-phosphate from D-erythrose 4-phosphate: step 5/5. Functionally, catalyzes the complicated ring closure reaction between the two acyclic compounds 1-deoxy-D-xylulose-5-phosphate (DXP) and 3-amino-2-oxopropyl phosphate (1-amino-acetone-3-phosphate or AAP) to form pyridoxine 5'-phosphate (PNP) and inorganic phosphate. The sequence is that of Pyridoxine 5'-phosphate synthase from Agrobacterium fabrum (strain C58 / ATCC 33970) (Agrobacterium tumefaciens (strain C58)).